Reading from the N-terminus, the 151-residue chain is Transcriptional regulator MraZ (151 aa).

2 consecutive SpoVT-AbrB domains span residues 5–51 (AHEL…PVAE) and 81–124 (AEIL…GREQ).

This sequence belongs to the MraZ family. Forms oligomers.

It localises to the cytoplasm. It is found in the nucleoid. The polypeptide is Transcriptional regulator MraZ (Neisseria meningitidis serogroup C / serotype 2a (strain ATCC 700532 / DSM 15464 / FAM18)).